A 201-amino-acid chain; its full sequence is Aminoglycoside N(6')-acetyltransferase type 1 (201 aa).

The N-acetyltransferase domain maps to 25–192 (VTLRLMTEHD…PAVYMVQTRQ (168 aa)). Residues tryptophan 51 and aspartate 154 each contribute to the substrate site. Asparagine 159 is a binding site for acetyl-CoA.

Homodimer.

It catalyses the reaction kanamycin B + acetyl-CoA = N(6')-acetylkanamycin B + CoA + H(+). Its function is as follows. Catalyzes the transfer of an acetyl group from acetyl-CoA to the 6'-amino group of aminoglycoside molecules conferring resistance to antibiotics containing the purpurosamine ring including amikacin and kanamycin. The sequence is that of Aminoglycoside N(6')-acetyltransferase type 1 (aacA4) from Serratia marcescens.